A 153-amino-acid chain; its full sequence is Lipoprotein signal peptidase (153 aa).

Helical transmembrane passes span isoleucine 6–valine 26, glutamine 60–histidine 80, and aspartate 85–isoleucine 105. Active-site residues include aspartate 115 and aspartate 131. The helical transmembrane segment at phenylalanine 124–alanine 144 threads the bilayer.

This sequence belongs to the peptidase A8 family.

It localises to the cell membrane. The catalysed reaction is Release of signal peptides from bacterial membrane prolipoproteins. Hydrolyzes -Xaa-Yaa-Zaa-|-(S,diacylglyceryl)Cys-, in which Xaa is hydrophobic (preferably Leu), and Yaa (Ala or Ser) and Zaa (Gly or Ala) have small, neutral side chains.. The protein operates within protein modification; lipoprotein biosynthesis (signal peptide cleavage). Functionally, this protein specifically catalyzes the removal of signal peptides from prolipoproteins. This Streptococcus pneumoniae (strain ATCC BAA-255 / R6) protein is Lipoprotein signal peptidase.